Here is a 179-residue protein sequence, read N- to C-terminus: Putative cleavage and polyadenylation specificity factor subunit 4-like protein (179 aa).

C3H1-type zinc fingers lie at residues 35–61, 62–89, 90–117, 118–145, and 146–169; these read KSAS…RHDR, GEKM…HQYD, LTRM…HVKP, AFKS…HVPR, and IMCL…QKIR.

This sequence belongs to the CPSF4/YTH1 family.

This chain is Putative cleavage and polyadenylation specificity factor subunit 4-like protein (CPSF4L), found in Homo sapiens (Human).